The sequence spans 41 residues: Photosystem I reaction center subunit IX (41 aa).

The helical transmembrane segment at 7–27 (YLSTAPVITAIWLGITAGILI) threads the bilayer.

It belongs to the PsaJ family.

The protein localises to the cellular thylakoid membrane. May help in the organization of the PsaE and PsaF subunits. In Cyanothece sp. (strain PCC 7425 / ATCC 29141), this protein is Photosystem I reaction center subunit IX.